The primary structure comprises 1001 residues: Chloride channel protein clh-3 (1001 aa).

Topologically, residues 1 to 48 are cytoplasmic; that stretch reads MGIGTKILSKIEKNKTSDGLTIPLTPTTQKQSSSWCSFESIKTFFRTV. Helical transmembrane passes span 49–85 and 91–117; these read IRDW…RLFD and HFTL…AHYI. The Selectivity filter part_1 motif lies at 123–127; sequence GSGIP. Position 124 (Ser-124) interacts with chloride. An intramembrane region (helical) is located at residues 126-133; sequence IPEMKTIL. The next 2 membrane-spanning stretches (helical) occupy residues 142–160 and 167–185; these read LSVR…SLGS and EGPF…TRLV. A Selectivity filter part_2 motif is present at residues 165-169; the sequence is GKEGP. 2 consecutive intramembrane regions (helical) follow at residues 202 to 214 and 218 to 226; these read MLAA…VACT and PIGGVLFSI. The next 5 membrane-spanning stretches (helical) occupy residues 238–258, 285–313, 322–341, 405–425, and 433–456; these read YWRG…LRMF, LPIF…VLFL, IFQK…ISSL, YSPF…AILA, and GIFM…VFSL. Residues 433 to 437 carry the Selectivity filter part_3 motif; sequence GIFMP. Residues Ile-434 and Phe-435 each coordinate chloride. The helical intramembrane region spans 473-487; the sequence is GVYAVVGAAAFCGAV. The segment at residues 488–489 is an intramembrane region (note=Loop between two helices); the sequence is TH. The helical intramembrane region spans 490-501; that stretch reads TVSVAVIVFELT. An intramembrane region (note=Loop between two helices) is located at residues 502–506; that stretch reads GQLCH. A helical transmembrane segment spans residues 507–524; it reads LLPVMIAVLIANAVASYL. The Cytoplasmic portion of the chain corresponds to 525-1001; the sequence is QPSIYDSIIR…LPDDVHDEKF (477 aa). Tyr-529 contacts chloride. Residues 560-619 form the CBS 1 domain; it reads MISPLVYIAKDSTVGDIKRALETKTRIRAFPLVENMESLALVGSVSRSQLQRYVDSQIGT. The stretch at 625–657 forms a coiled coil; sequence EATRRIKQRLEDEESERKRREESKSDDTEDSLE. Basic and acidic residues predominate over residues 634–650; that stretch reads LEDEESERKRREESKSD. A disordered region spans residues 634–662; the sequence is LEDEESERKRREESKSDDTEDSLETTGAG. Ser-742 and Ser-747 each carry phosphoserine; by gck-3. A CBS 2 domain is found at 788 to 845; that stretch reads IDSTPFQLSEYTSLFKAHSLFSLLGLNRAYVTKKGQLIGVVALKELRLAIEYLQSGKV.

Belongs to the chloride channel (TC 2.A.49) family. Isoform a interacts (via RFLI motif) with gck-3 (via C-terminus). In terms of processing, phosphorylated by gck-3; phosphorylation at both Ser-742 and Ser-747 is required to inhibit channel activity. Dephosphorylated by gsp-1/2 during cell swelling and oocyte meiotic maturation, which results in channel activation. As to expression, expressed in excretory cell, 4 anterior epithelial cells of the intestine, hermaphrodite-specific neurons and enteric muscles. Expressed also in vulva and uterus. Isoform a is expressed in oocytes (at protein level).

The protein resides in the cell membrane. In terms of biological role, voltage-gated chloride channel. Insensitive to depolarizing conditioning voltages, requires low voltages for activation, insensitive to chloride levels and has a mild sensitivity to low pH. Channel gating properties are conferred by the cytoplasmic C-terminus. Plays a role in egg laying by modulating hermaphrodite-specific neurons (HSN) excitability and the ovulatory contractions of gap-junction-coupled gonadal sheath cells. When active, may prevent tubular formation of the excretory canals. Activated during oocyte meiotic maturation and by membrane hyperpolarization and cell swelling. Inhibited by Zn(2+) and to a lesser extent by Cd(2+). Its function is as follows. Voltage-gated chloride channel. Sensitive to depolarizing conditioning voltages, requires stronger voltages for activation and activation is slower, is inhibited by low concentrations of chloride and is activated by low pH. Channel gating properties are conferred by the cytoplasmic C-terminus. The chain is Chloride channel protein clh-3 from Caenorhabditis elegans.